A 143-amino-acid chain; its full sequence is Potassium voltage-gated channel subfamily E regulatory beta subunit 5 (143 aa).

N-linked (GlcNAc...) asparagine glycans are attached at residues Asn-2 and Asn-25. Residues 61 to 81 (LYILLIMIFYACLAGGLILAY) form a helical membrane-spanning segment. Residues 82 to 143 (TRSRKLVEAK…PALAQGAERV (62 aa)) are Cytoplasmic-facing.

The protein belongs to the potassium channel KCNE family. In terms of assembly, interacts with KCNQ1; impairs KCNQ1 localization in lipid rafts and only conducts current upon strong and continued depolarization. Detected in embryonal dorsal root and nerve ganglia, in the somites and in myoepicardial layer of the developing heart wall. Detected at lower levels in the central nervous system (CNS) and in developing limb.

The protein resides in the membrane. Its function is as follows. Potassium channel ancillary subunit that is essential for generation of some native K(+) currents by virtue of formation of heteromeric ion channel complex with voltage-gated potassium (Kv) channel pore-forming alpha subunits. Functions as an inhibitory beta-subunit of the repolarizing cardiac potassium ion channel KCNQ1. The sequence is that of Potassium voltage-gated channel subfamily E regulatory beta subunit 5 (Kcne5) from Mus musculus (Mouse).